A 926-amino-acid chain; its full sequence is Isoleucine--tRNA ligase (926 aa).

Residues 57-67 (PYANGNIHMGH) carry the 'HIGH' region motif. E555 serves as a coordination point for L-isoleucyl-5'-AMP. The 'KMSKS' region signature appears at 596–600 (KMSKS). Position 599 (K599) interacts with ATP. The Zn(2+) site is built by C897, C900, C914, and C917.

The protein belongs to the class-I aminoacyl-tRNA synthetase family. IleS type 1 subfamily. As to quaternary structure, monomer. It depends on Zn(2+) as a cofactor.

It is found in the cytoplasm. The enzyme catalyses tRNA(Ile) + L-isoleucine + ATP = L-isoleucyl-tRNA(Ile) + AMP + diphosphate. In terms of biological role, catalyzes the attachment of isoleucine to tRNA(Ile). As IleRS can inadvertently accommodate and process structurally similar amino acids such as valine, to avoid such errors it has two additional distinct tRNA(Ile)-dependent editing activities. One activity is designated as 'pretransfer' editing and involves the hydrolysis of activated Val-AMP. The other activity is designated 'posttransfer' editing and involves deacylation of mischarged Val-tRNA(Ile). This chain is Isoleucine--tRNA ligase, found in Natranaerobius thermophilus (strain ATCC BAA-1301 / DSM 18059 / JW/NM-WN-LF).